The following is a 44-amino-acid chain: Thymosin beta (44 aa).

The interval 1–44 (MSDKHDKPDISEVTKFDKSKLKKTETHEKNPLPTKETIDQEKQG) is disordered. N-acetylserine is present on serine 2.

Expressed in regenerating axons.

It is found in the cytoplasm. The protein localises to the cytoskeleton. Its function is as follows. Plays an important role in the organization of the cytoskeleton. Binds to and sequesters actin monomers (G actin) and therefore inhibits actin polymerization. May be involved in the regulation of structural plasticity in the CNS. The protein is Thymosin beta of Aplysia californica (California sea hare).